A 1172-amino-acid chain; its full sequence is Lysylphosphatidylglycerol biosynthesis bifunctional protein LysX (1172 aa).

The segment at 1-34 is disordered; that stretch reads MGLHLTVPGLRRDGRGVQSNSHDTSSKTTADISR. The phosphatidylglycerol lysyltransferase stretch occupies residues 1-663; that stretch reads MGLHLTVPGL…LLHHDGSAPD (663 aa). The span at 17 to 31 shows a compositional bias: polar residues; it reads VQSNSHDTSSKTTAD. Helical transmembrane passes span 80–100, 122–142, 146–166, 177–197, 214–234, 272–292, and 612–632; these read VPAA…LASV, FPDT…ALTA, IAWL…AAEI, FGEN…VLGY, AVWL…VELF, AIFG…LFLS, and VIPR…LPFS. Residues 664–1172 form a lysine--tRNA ligase region; the sequence is VSGLRQVGLT…TLPFPLAKPH (509 aa). Residues 726–804 constitute a DNA-binding region (OB); sequence VSVSGRIMRI…SLIVSGWRLI (79 aa). Residues aspartate 1084 and glutamate 1091 each contribute to the Mg(2+) site.

It in the N-terminal section; belongs to the LPG synthetase family. In the C-terminal section; belongs to the class-II aminoacyl-tRNA synthetase family. Mg(2+) is required as a cofactor.

The protein localises to the cell membrane. It carries out the reaction tRNA(Lys) + L-lysine + ATP = L-lysyl-tRNA(Lys) + AMP + diphosphate. It catalyses the reaction L-lysyl-tRNA(Lys) + a 1,2-diacyl-sn-glycero-3-phospho-(1'-sn-glycerol) = a 1,2-diacyl-sn-glycero-3-phospho-1'-(3'-O-L-lysyl)-sn-glycerol + tRNA(Lys). Functionally, catalyzes the production of L-lysyl-tRNA(Lys)transfer and the transfer of a lysyl group from L-lysyl-tRNA(Lys) to membrane-bound phosphatidylglycerol (PG), which produces lysylphosphatidylglycerol (LPG), one of the components of the bacterial membrane with a positive net charge. LPG synthesis contributes to the resistance to cationic antimicrobial peptides (CAMPs) and likely protects M.tuberculosis against the CAMPs produced by competiting microorganisms (bacteriocins). In fact, the modification of anionic phosphatidylglycerol with positively charged L-lysine results in repulsion of the peptides. This is Lysylphosphatidylglycerol biosynthesis bifunctional protein LysX (lysX) from Mycobacterium bovis (strain ATCC BAA-935 / AF2122/97).